The sequence spans 168 residues: Shikimate kinase (168 aa).

10–15 contributes to the ATP binding site; sequence CSGKST. Ser14 is a binding site for Mg(2+). The substrate site is built by Asp32, Arg56, and Gly78. Residue Arg116 coordinates ATP. Substrate is bound at residue Arg133.

It belongs to the shikimate kinase family. Monomer. Mg(2+) serves as cofactor.

It is found in the cytoplasm. It catalyses the reaction shikimate + ATP = 3-phosphoshikimate + ADP + H(+). The protein operates within metabolic intermediate biosynthesis; chorismate biosynthesis; chorismate from D-erythrose 4-phosphate and phosphoenolpyruvate: step 5/7. Catalyzes the specific phosphorylation of the 3-hydroxyl group of shikimic acid using ATP as a cosubstrate. This is Shikimate kinase from Aquifex aeolicus (strain VF5).